Reading from the N-terminus, the 132-residue chain is Fumarate reductase subunit C (132 aa).

3 consecutive transmembrane segments (helical) span residues 36 to 56 (AIPT…LGSL), 70 to 90 (IVII…VTYY), and 110 to 130 (IITM…LVFM).

Belongs to the FrdC family. In terms of assembly, part of an enzyme complex containing four subunits: a flavoprotein (FrdA), an iron-sulfur protein (FrdB), and two hydrophobic anchor proteins (FrdC and FrdD).

It localises to the cell inner membrane. Its function is as follows. Anchors the catalytic components of the fumarate reductase complex to the cell membrane, binds quinones. The sequence is that of Fumarate reductase subunit C from Pasteurella multocida (strain Pm70).